A 218-amino-acid polypeptide reads, in one-letter code: Cytochrome b6 (218 aa).

The chain crosses the membrane as a helical span at residues 35-55 (IFYCLGGITLVCFLIQFATGF). Cysteine 38 is a heme c binding site. Positions 89 and 103 each coordinate heme b. A run of 3 helical transmembrane segments spans residues 93–113 (ASMM…TGGF), 119–139 (LTWV…VTGY), and 189–209 (LHTF…FLMI). Heme b is bound by residues histidine 190 and histidine 205.

This sequence belongs to the cytochrome b family. PetB subfamily. The 4 large subunits of the cytochrome b6-f complex are cytochrome b6, subunit IV (17 kDa polypeptide, PetD), cytochrome f and the Rieske protein, while the 4 small subunits are PetG, PetL, PetM and PetN. The complex functions as a dimer. The cofactor is heme b. Heme c is required as a cofactor.

It is found in the cellular thylakoid membrane. Component of the cytochrome b6-f complex, which mediates electron transfer between photosystem II (PSII) and photosystem I (PSI), cyclic electron flow around PSI, and state transitions. The chain is Cytochrome b6 from Prochlorococcus marinus (strain MIT 9301).